The primary structure comprises 198 residues: FMN-dependent NADH:quinone oxidoreductase (198 aa).

FMN is bound by residues S10, 16–18 (SQS), 94–97 (MYNF), and 138–141 (TRGG).

Belongs to the azoreductase type 1 family. As to quaternary structure, homodimer. FMN serves as cofactor.

It catalyses the reaction 2 a quinone + NADH + H(+) = 2 a 1,4-benzosemiquinone + NAD(+). The enzyme catalyses N,N-dimethyl-1,4-phenylenediamine + anthranilate + 2 NAD(+) = 2-(4-dimethylaminophenyl)diazenylbenzoate + 2 NADH + 2 H(+). In terms of biological role, quinone reductase that provides resistance to thiol-specific stress caused by electrophilic quinones. Its function is as follows. Also exhibits azoreductase activity. Catalyzes the reductive cleavage of the azo bond in aromatic azo compounds to the corresponding amines. In Shewanella putrefaciens (strain CN-32 / ATCC BAA-453), this protein is FMN-dependent NADH:quinone oxidoreductase.